The following is a 105-amino-acid chain: Thioredoxin (105 aa).

A Thioredoxin domain is found at 1-105; the sequence is MVNNVTDSSF…SLLDWINKSI (105 aa). Residues C30 and C33 are joined by a disulfide bond.

Belongs to the thioredoxin family.

In terms of biological role, component of the thioredoxin-thioredoxin reductase system. Participates in various redox reactions through the reversible oxidation of its active center dithiol to a disulfide and catalyzes dithiol-disulfide exchange reactions. The chain is Thioredoxin (trxA) from Rickettsia prowazekii (strain Madrid E).